Reading from the N-terminus, the 495-residue chain is Membrane-bound lytic murein transglycosylase F (495 aa).

Residues 1 to 30 form the signal peptide; it reads MSRIRHHRFIQSCLVISTLLITLTGCQVES. The interval 31 to 270 is non-LT domain; it reads EPKTKLEQIR…LLEEKYFGHV (240 aa). An LT domain region spans residues 272 to 495; the sequence is SFDYVDTRAF…SVSQAIETKK (224 aa). The active site involves E315.

The protein in the N-terminal section; belongs to the bacterial solute-binding protein 3 family. It in the C-terminal section; belongs to the transglycosylase Slt family.

Its subcellular location is the cell outer membrane. It catalyses the reaction Exolytic cleavage of the (1-&gt;4)-beta-glycosidic linkage between N-acetylmuramic acid (MurNAc) and N-acetylglucosamine (GlcNAc) residues in peptidoglycan, from either the reducing or the non-reducing ends of the peptidoglycan chains, with concomitant formation of a 1,6-anhydrobond in the MurNAc residue.. In terms of biological role, murein-degrading enzyme that degrades murein glycan strands and insoluble, high-molecular weight murein sacculi, with the concomitant formation of a 1,6-anhydromuramoyl product. Lytic transglycosylases (LTs) play an integral role in the metabolism of the peptidoglycan (PG) sacculus. Their lytic action creates space within the PG sacculus to allow for its expansion as well as for the insertion of various structures such as secretion systems and flagella. The sequence is that of Membrane-bound lytic murein transglycosylase F from Aliivibrio fischeri (strain ATCC 700601 / ES114) (Vibrio fischeri).